The following is a 318-amino-acid chain: Aspartate carbamoyltransferase catalytic subunit (318 aa).

The carbamoyl phosphate site is built by Arg-66 and Thr-67. Residue Lys-94 coordinates L-aspartate. Residues Arg-116, His-144, and Gln-147 each coordinate carbamoyl phosphate. Positions 177 and 231 each coordinate L-aspartate. Gly-272 and Pro-273 together coordinate carbamoyl phosphate.

Belongs to the aspartate/ornithine carbamoyltransferase superfamily. ATCase family. Heterododecamer (2C3:3R2) of six catalytic PyrB chains organized as two trimers (C3), and six regulatory PyrI chains organized as three dimers (R2).

The enzyme catalyses carbamoyl phosphate + L-aspartate = N-carbamoyl-L-aspartate + phosphate + H(+). The protein operates within pyrimidine metabolism; UMP biosynthesis via de novo pathway; (S)-dihydroorotate from bicarbonate: step 2/3. Functionally, catalyzes the condensation of carbamoyl phosphate and aspartate to form carbamoyl aspartate and inorganic phosphate, the committed step in the de novo pyrimidine nucleotide biosynthesis pathway. The protein is Aspartate carbamoyltransferase catalytic subunit of Frankia casuarinae (strain DSM 45818 / CECT 9043 / HFP020203 / CcI3).